Reading from the N-terminus, the 303-residue chain is Indole-3-glycerol phosphate synthase (303 aa).

This sequence belongs to the TrpC family.

The catalysed reaction is 1-(2-carboxyphenylamino)-1-deoxy-D-ribulose 5-phosphate + H(+) = (1S,2R)-1-C-(indol-3-yl)glycerol 3-phosphate + CO2 + H2O. Its pathway is amino-acid biosynthesis; L-tryptophan biosynthesis; L-tryptophan from chorismate: step 4/5. The polypeptide is Indole-3-glycerol phosphate synthase (Acaryochloris marina (strain MBIC 11017)).